The chain runs to 426 residues: Delta-aminolevulinic acid dehydratase, chloroplastic (426 aa).

The transit peptide at 1-45 (MASTVSFSPANVQMLQGRSCHGHAAFGGCSAVPRTGPRMRSVAVR) directs the protein to the chloroplast. The interval 74 to 107 (GRFPAPPPLVRPKAPEGTPQIRPLDLTKRPRRNR) is disordered. Lys293 acts as the Schiff-base intermediate with substrate in catalysis. 5-aminolevulinate contacts are provided by Arg303 and Lys315. Glu331 provides a ligand contact to Mg(2+). The active-site Schiff-base intermediate with substrate is the Lys346. Residues Ser372 and Tyr411 each coordinate 5-aminolevulinate.

Belongs to the ALAD family. Homooctamer. Mg(2+) is required as a cofactor.

Its subcellular location is the plastid. The protein resides in the chloroplast. It catalyses the reaction 2 5-aminolevulinate = porphobilinogen + 2 H2O + H(+). Its pathway is porphyrin-containing compound metabolism; protoporphyrin-IX biosynthesis; coproporphyrinogen-III from 5-aminolevulinate: step 1/4. Functionally, catalyzes an early step in the biosynthesis of tetrapyrroles. Binds two molecules of 5-aminolevulinate per subunit, each at a distinct site, and catalyzes their condensation to form porphobilinogen. The protein is Delta-aminolevulinic acid dehydratase, chloroplastic (HEMB) of Oryza sativa subsp. japonica (Rice).